Consider the following 252-residue polypeptide: 2-succinyl-6-hydroxy-2,4-cyclohexadiene-1-carboxylate synthase (252 aa).

Belongs to the AB hydrolase superfamily. MenH family. As to quaternary structure, monomer.

The catalysed reaction is 5-enolpyruvoyl-6-hydroxy-2-succinyl-cyclohex-3-ene-1-carboxylate = (1R,6R)-6-hydroxy-2-succinyl-cyclohexa-2,4-diene-1-carboxylate + pyruvate. Its pathway is quinol/quinone metabolism; 1,4-dihydroxy-2-naphthoate biosynthesis; 1,4-dihydroxy-2-naphthoate from chorismate: step 3/7. It participates in quinol/quinone metabolism; menaquinone biosynthesis. In terms of biological role, catalyzes a proton abstraction reaction that results in 2,5-elimination of pyruvate from 2-succinyl-5-enolpyruvyl-6-hydroxy-3-cyclohexene-1-carboxylate (SEPHCHC) and the formation of 2-succinyl-6-hydroxy-2,4-cyclohexadiene-1-carboxylate (SHCHC). The protein is 2-succinyl-6-hydroxy-2,4-cyclohexadiene-1-carboxylate synthase of Escherichia coli (strain ATCC 8739 / DSM 1576 / NBRC 3972 / NCIMB 8545 / WDCM 00012 / Crooks).